The chain runs to 107 residues: Sulmotoxin 1 (107 aa).

An N-terminal signal peptide occupies residues M1 to A19. A propeptide spanning residues N20 to R34 is cleaved from the precursor. 5 cysteine pairs are disulfide-bonded: C44/C68, C47/C55, C61/C83, C87/C98, and C99/C104.

Belongs to the three-finger toxin family. Ancestral subfamily. Boigatoxin sub-subfamily. In terms of assembly, monomer. As to expression, expressed by the venom gland.

It localises to the secreted. Functionally, mammal-specific neurotoxin (tested on mice). Not toxic to lizards (tested on geckos). In Spilotes sulphureus (Amazon puffing snake), this protein is Sulmotoxin 1.